The primary structure comprises 582 residues: Calcium-dependent protein kinase 24 (582 aa).

Residues 1 to 36 (MGSCVSSPLKGSPFGKRPVRRRHSSNSRTSSVPRFD) form a disordered region. G2 carries the N-myristoyl glycine lipid modification. One can recognise a Protein kinase domain in the interval 66–324 (YDLGKELGRG…VQEVLEHPWI (259 aa)). Residues 72–80 (LGRGEFGVT) and K95 contribute to the ATP site. Residue D190 is the Proton acceptor of the active site. S230 carries the post-translational modification Phosphoserine. The tract at residues 330-360 (APNVNLGDNVRTKIQQFLLMNRFKKKVLRIV) is autoinhibitory domain. EF-hand domains are found at residues 367–402 (EEIA…IGQV), 403–438 (VPDG…LKRM), 439–474 (GCDE…DKLG), and 478–513 (GNDQ…GTDW). Ca(2+) contacts are provided by D380, D382, N384, H386, E391, D416, D418, N420, M422, E427, D452, N454, N456, E463, D491, N493, D495, and R497. Phosphoserine is present on S499. E502 contacts Ca(2+).

This sequence belongs to the protein kinase superfamily. Ser/Thr protein kinase family. CDPK subfamily.

The protein resides in the membrane. It carries out the reaction L-seryl-[protein] + ATP = O-phospho-L-seryl-[protein] + ADP + H(+). The enzyme catalyses L-threonyl-[protein] + ATP = O-phospho-L-threonyl-[protein] + ADP + H(+). With respect to regulation, activated by calcium. Autophosphorylation may play an important role in the regulation of the kinase activity. In terms of biological role, may play a role in signal transduction pathways that involve calcium as a second messenger. In Arabidopsis thaliana (Mouse-ear cress), this protein is Calcium-dependent protein kinase 24 (CPK24).